Consider the following 145-residue polypeptide: Putative pre-16S rRNA nuclease (145 aa).

This sequence belongs to the YqgF nuclease family.

The protein resides in the cytoplasm. In terms of biological role, could be a nuclease involved in processing of the 5'-end of pre-16S rRNA. The sequence is that of Putative pre-16S rRNA nuclease from Pseudomonas fluorescens (strain ATCC BAA-477 / NRRL B-23932 / Pf-5).